The following is a 299-amino-acid chain: Protease HtpX homolog (299 aa).

2 helical membrane-spanning segments follow: residues 15–35 and 39–59; these read ILLL…GYLF and GLGG…SMIF. Position 143 (H143) interacts with Zn(2+). E144 is an active-site residue. Residue H147 participates in Zn(2+) binding. Helical transmembrane passes span 158–178 and 198–218; these read IAVA…RMMW and IIML…ATLV. E227 contributes to the Zn(2+) binding site.

It belongs to the peptidase M48B family. Zn(2+) is required as a cofactor.

It localises to the cell membrane. The sequence is that of Protease HtpX homolog from Streptococcus pneumoniae serotype 19F (strain G54).